The sequence spans 72 residues: MRVSYLSLTLTIVVVIAIIYAPETEAKAWADADAEAGLGFLAKIMGKVGMRMIKKLVPEAAKVAVDQLSQQQ.

A signal peptide spans 1–26 (MRVSYLSLTLTIVVVIAIIYAPETEA). A propeptide spanning residues 27-36 (KAWADADAEA) is cleaved from the precursor.

Belongs to the formicidae venom precursor-01 superfamily. Expressed by the venom gland.

It is found in the secreted. In vivo, this neurotoxin paralyzes about 40% of blowflies (L.caesar) one hour after intrathoracic injection, when tested at high doses (28 nmol/g). This is U10-myrmicitoxin-Tb1a from Tetramorium bicarinatum (Tramp ant).